A 225-amino-acid polypeptide reads, in one-letter code: MAVIVPVITVDGPSGAGKGTLCQALAKAFGWHLLDSGAIYRVLALAALHHHVDITSEDALVPLAANLDVRFIPNENGLSVILEGEDVSTEIRTETVGNTASQAATFPRVREALLRRQRAFRTAPGLIADGRDMGTIVFPDAQVKIFLDASAQERARRRMLQLQEKGFNVNFERLLSEIKERDYRDRNRAVAPLVAAKDALILDSTSLSIDEVIEKSLAYAKKICN.

Residue 12–20 coordinates ATP; that stretch reads GPSGAGKGT.

The protein belongs to the cytidylate kinase family. Type 1 subfamily.

It is found in the cytoplasm. The enzyme catalyses CMP + ATP = CDP + ADP. It carries out the reaction dCMP + ATP = dCDP + ADP. This is Cytidylate kinase from Proteus mirabilis (strain HI4320).